Here is a 334-residue protein sequence, read N- to C-terminus: Transcription factor TGA2.1 (334 aa).

A compositionally biased stretch (polar residues) spans 1 to 13 (MADASSRTDTSIV). The segment at 1-49 (MADASSRTDTSIVVDNDDKNHQLENGHSGAVMASNSSDRSDRSDKLMDQ) is disordered. Over residues 38 to 49 (DRSDRSDKLMDQ) the composition is skewed to basic and acidic residues. In terms of domain architecture, bZIP spans 48 to 92 (DQKTIRRLAQNREAARKSRLRKKAYVQQLESSKLKLAQLEQELQK). The basic motif stretch occupies residues 50–70 (KTIRRLAQNREAARKSRLRKK). Residues 76 to 90 (LESSKLKLAQLEQEL) form a leucine-zipper region. One can recognise a DOG1 domain in the interval 115-331 (ALTFDLEYTR…RALSSLWLAR (217 aa)).

It belongs to the bZIP family. Interacts with NPR1/NH1 and NPR3/NH3.

Its subcellular location is the nucleus. Its function is as follows. Plays a negative role in rice basal defense responses to the bacterial blight pathogen Xanthomomas oryzae pv. oryzae (Xoo). May function in both positive and negative regulation of rice defense genes. Binds DNA in vitro. Acts as a transcriptional activator when bound to NPR1/NH1 in vitro. Binds to the promoter sequence of CRK10 in vitro. This chain is Transcription factor TGA2.1, found in Oryza sativa subsp. japonica (Rice).